The primary structure comprises 345 residues: MTDNKPSLSYKDAGVDIDAGNELVERIKSVSKKTHRPEVRGGLGGFGALCSLPTKYKEPLLVSGTDGVGTKLRLAMDLEQHDGIGIDLVAMCVNDLIVQGAEPLFFLDYYATGKLDVDTAAKVVTGIGKGCELSGCALIGGETAEMPGMYHGNDYDVAGFCVGVVEAADVIDGSRVKAGNVLIALGSSGPHSNGYSLVRKILEVSGCEASEVFDGKPLSEHLLEPTRIYVKSVLHLLESVQVNAITHITGGGFWENIPRVLPQGTKAVIDESSWQWPSIFNWLQENGNVTTHEMYRTFNCGVGLMIALEADKADEAIAILKSQGENVWQIGHIEDSSDNNQVEIK.

The protein belongs to the AIR synthase family.

The protein resides in the cytoplasm. The enzyme catalyses 2-formamido-N(1)-(5-O-phospho-beta-D-ribosyl)acetamidine + ATP = 5-amino-1-(5-phospho-beta-D-ribosyl)imidazole + ADP + phosphate + H(+). It functions in the pathway purine metabolism; IMP biosynthesis via de novo pathway; 5-amino-1-(5-phospho-D-ribosyl)imidazole from N(2)-formyl-N(1)-(5-phospho-D-ribosyl)glycinamide: step 2/2. The protein is Phosphoribosylformylglycinamidine cyclo-ligase of Pseudoalteromonas atlantica (strain T6c / ATCC BAA-1087).